A 576-amino-acid chain; its full sequence is Arginine--tRNA ligase (576 aa).

The 'HIGH' region motif lies at 122–132 (PNVAKEMHVGH).

It belongs to the class-I aminoacyl-tRNA synthetase family. As to quaternary structure, monomer.

The protein localises to the cytoplasm. It carries out the reaction tRNA(Arg) + L-arginine + ATP = L-arginyl-tRNA(Arg) + AMP + diphosphate. The chain is Arginine--tRNA ligase from Serratia proteamaculans (strain 568).